Here is a 628-residue protein sequence, read N- to C-terminus: 69 kDa protein (628 aa).

Disordered regions lie at residues 1–24, 141–492, and 537–628; these read MSNGLPISIGRPCTHDSQRSLSAS, HFHA…SDPV, and VLPT…PDTD. Composition is skewed to polar residues over residues 166–178 and 295–305; these read RTSVRQPRSTTRG and TGHIPSTTASR. Over residues 433 to 451 the composition is skewed to pro residues; the sequence is EGPPPPPRRLPSPATPPQS. The segment covering 586–596 has biased composition (polar residues); the sequence is PSGPLRSQSPS.

The protein belongs to the tymoviridae protein p69 family.

Its function is as follows. Acts as a suppressor of RNA-mediated gene silencing, also known as post-transcriptional gene silencing (PTGS), a mechanism of plant viral defense that limits the accumulation of viral RNAs. This chain is 69 kDa protein, found in Turnip yellow mosaic virus (isolate Australia).